The sequence spans 431 residues: Adenylosuccinate synthetase 2 (431 aa).

Residues Gly13 to Lys19 and Gly41 to Thr43 contribute to the GTP site. The active-site Proton acceptor is Asp14. The Mg(2+) site is built by Asp14 and Gly41. Residues Asp14 to Lys17, Asn39 to His42, Thr130, Arg144, Gln225, Thr240, and Arg304 each bind IMP. His42 acts as the Proton donor in catalysis. Ser300–Arg306 contributes to the substrate binding site. Residues Arg306, Lys332 to Asp334, and Ser414 to Gly416 each bind GTP.

It belongs to the adenylosuccinate synthetase family. In terms of assembly, homodimer. The cofactor is Mg(2+).

Its subcellular location is the cytoplasm. It catalyses the reaction IMP + L-aspartate + GTP = N(6)-(1,2-dicarboxyethyl)-AMP + GDP + phosphate + 2 H(+). It participates in purine metabolism; AMP biosynthesis via de novo pathway; AMP from IMP: step 1/2. Its function is as follows. Plays an important role in the de novo pathway of purine nucleotide biosynthesis. Catalyzes the first committed step in the biosynthesis of AMP from IMP. The chain is Adenylosuccinate synthetase 2 from Chromobacterium violaceum (strain ATCC 12472 / DSM 30191 / JCM 1249 / CCUG 213 / NBRC 12614 / NCIMB 9131 / NCTC 9757 / MK).